The following is a 324-amino-acid chain: Probable 6-phosphogluconolactonase 4, chloroplastic (324 aa).

Residues Met-1–Ala-61 constitute a chloroplast transit peptide. Residues Arg-20–His-43 form a disordered region. Residues Pro-24 to Arg-34 are compositionally biased toward low complexity.

Belongs to the glucosamine/galactosamine-6-phosphate isomerase family. 6-phosphogluconolactonase subfamily.

Its subcellular location is the plastid. It localises to the chloroplast. The catalysed reaction is 6-phospho-D-glucono-1,5-lactone + H2O = 6-phospho-D-gluconate + H(+). It participates in carbohydrate degradation; pentose phosphate pathway; D-ribulose 5-phosphate from D-glucose 6-phosphate (oxidative stage): step 2/3. Its function is as follows. Hydrolysis of 6-phosphogluconolactone to 6-phosphogluconate. This chain is Probable 6-phosphogluconolactonase 4, chloroplastic, found in Oryza sativa subsp. indica (Rice).